A 181-amino-acid chain; its full sequence is Adenine phosphoribosyltransferase (181 aa).

It belongs to the purine/pyrimidine phosphoribosyltransferase family. As to quaternary structure, homodimer.

It localises to the cytoplasm. The enzyme catalyses AMP + diphosphate = 5-phospho-alpha-D-ribose 1-diphosphate + adenine. Its pathway is purine metabolism; AMP biosynthesis via salvage pathway; AMP from adenine: step 1/1. In terms of biological role, catalyzes a salvage reaction resulting in the formation of AMP, that is energically less costly than de novo synthesis. The polypeptide is Adenine phosphoribosyltransferase (Aliivibrio fischeri (strain ATCC 700601 / ES114) (Vibrio fischeri)).